Reading from the N-terminus, the 157-residue chain is SsrA-binding protein (157 aa).

This sequence belongs to the SmpB family.

The protein resides in the cytoplasm. Required for rescue of stalled ribosomes mediated by trans-translation. Binds to transfer-messenger RNA (tmRNA), required for stable association of tmRNA with ribosomes. tmRNA and SmpB together mimic tRNA shape, replacing the anticodon stem-loop with SmpB. tmRNA is encoded by the ssrA gene; the 2 termini fold to resemble tRNA(Ala) and it encodes a 'tag peptide', a short internal open reading frame. During trans-translation Ala-aminoacylated tmRNA acts like a tRNA, entering the A-site of stalled ribosomes, displacing the stalled mRNA. The ribosome then switches to translate the ORF on the tmRNA; the nascent peptide is terminated with the 'tag peptide' encoded by the tmRNA and targeted for degradation. The ribosome is freed to recommence translation, which seems to be the essential function of trans-translation. This Rhodococcus jostii (strain RHA1) protein is SsrA-binding protein.